We begin with the raw amino-acid sequence, 871 residues long: Pentatricopeptide repeat-containing protein DOT4, chloroplastic (871 aa).

A chloroplast-targeting transit peptide spans Met1–Arg28. 18 PPR repeats span residues Ser60–Pro94, Thr96–Ile127, Asp128–Glu158, Lys159–Met193, Asp194–Glu228, Arg229–Arg259, Asp260–Ile294, Asp295–Arg329, Glu330–Arg360, Ser361–Pro395, Asp396–Phe430, Asp431–Ser465, Trp466–Pro497, Asp498–Ser532, Asp533–Lys563, Asp564–Ala598, Asp599–Glu629, and Thr635–Pro665. The type E motif stretch occupies residues Ile670–Lys745. Residues Gly746 to Ile776 are type E(+) motif. The tract at residues Glu777 to Trp871 is type DYW motif.

The protein belongs to the PPR family. PCMP-H subfamily. Requires Zn(2+) as cofactor. In terms of tissue distribution, weakly expressed in leaves.

The protein resides in the plastid. It is found in the chloroplast. Its function is as follows. Plays a major role in single RNA editing events in chloroplasts. Acts as a site-recognition transacting factor involved in the edition of the unique site (corresponding to cytidine-488) of rpoC1, which is a plastid-encoded subunit of the chloroplast DNA-directed RNA polymerase. May provide the catalytic activity for editing site conversion. Involved in leaf vasculature patterning. In Arabidopsis thaliana (Mouse-ear cress), this protein is Pentatricopeptide repeat-containing protein DOT4, chloroplastic.